The primary structure comprises 209 residues: Uracil phosphoribosyltransferase (209 aa).

5-phospho-alpha-D-ribose 1-diphosphate is bound by residues Arg-79, Arg-104, and 131–139 (DPMLATGGS). Uracil contacts are provided by residues Ile-194 and 199–201 (GDA). Asp-200 contacts 5-phospho-alpha-D-ribose 1-diphosphate.

It belongs to the UPRTase family. The cofactor is Mg(2+).

It carries out the reaction UMP + diphosphate = 5-phospho-alpha-D-ribose 1-diphosphate + uracil. It functions in the pathway pyrimidine metabolism; UMP biosynthesis via salvage pathway; UMP from uracil: step 1/1. Its activity is regulated as follows. Allosterically activated by GTP. In terms of biological role, catalyzes the conversion of uracil and 5-phospho-alpha-D-ribose 1-diphosphate (PRPP) to UMP and diphosphate. The sequence is that of Uracil phosphoribosyltransferase from Ligilactobacillus salivarius (strain UCC118) (Lactobacillus salivarius).